The primary structure comprises 364 residues: Methylthioribose-1-phosphate isomerase (364 aa).

Substrate contacts are provided by residues 49–51 (RGA), Arg-89, and Gln-201. Asp-242 acts as the Proton donor in catalysis. Position 252 to 253 (252 to 253 (NK)) interacts with substrate.

This sequence belongs to the eIF-2B alpha/beta/delta subunits family. MtnA subfamily.

The enzyme catalyses 5-(methylsulfanyl)-alpha-D-ribose 1-phosphate = 5-(methylsulfanyl)-D-ribulose 1-phosphate. It participates in amino-acid biosynthesis; L-methionine biosynthesis via salvage pathway; L-methionine from S-methyl-5-thio-alpha-D-ribose 1-phosphate: step 1/6. Functionally, catalyzes the interconversion of methylthioribose-1-phosphate (MTR-1-P) into methylthioribulose-1-phosphate (MTRu-1-P). This is Methylthioribose-1-phosphate isomerase from Leptospira interrogans serogroup Icterohaemorrhagiae serovar Lai (strain 56601).